A 196-amino-acid polypeptide reads, in one-letter code: C-type lectin domain family 3 member A (196 aa).

The first 22 residues, 1-22 (MAKNGLVLCILVVSLLLDQTDG), serve as a signal peptide directing secretion. Intrachain disulfides connect Cys-68-Cys-78, Cys-95-Cys-191, and Cys-167-Cys-183. The 119-residue stretch at 74–192 (VHKKCYLASE…CRSSKRYICE (119 aa)) folds into the C-type lectin domain.

Its subcellular location is the secreted. In terms of biological role, promotes cell adhesion to laminin and fibronectin. This Mus musculus (Mouse) protein is C-type lectin domain family 3 member A (Clec3a).